A 132-amino-acid polypeptide reads, in one-letter code: MVLTDPIADFLTRIRNANMAKHDSVEIPASNIKKSLTEILKQEGFIRDYEVTEDGKQGVIKITLKYGPNGERVISGLKRISKPGLRNYVSADNLPKVLNGLGIAIVSTSAGILTDKEAREKNVGGEVIAYVW.

Belongs to the universal ribosomal protein uS8 family. Part of the 30S ribosomal subunit. Contacts proteins S5 and S12.

Functionally, one of the primary rRNA binding proteins, it binds directly to 16S rRNA central domain where it helps coordinate assembly of the platform of the 30S subunit. The polypeptide is Small ribosomal subunit protein uS8 (Lactobacillus delbrueckii subsp. bulgaricus (strain ATCC BAA-365 / Lb-18)).